The following is a 96-amino-acid chain: Protein RnfH (96 aa).

Belongs to the UPF0125 (RnfH) family.

This Pectobacterium carotovorum subsp. carotovorum (strain PC1) protein is Protein RnfH.